The sequence spans 119 residues: Large ribosomal subunit protein bL19 (119 aa).

It belongs to the bacterial ribosomal protein bL19 family.

In terms of biological role, this protein is located at the 30S-50S ribosomal subunit interface and may play a role in the structure and function of the aminoacyl-tRNA binding site. This chain is Large ribosomal subunit protein bL19, found in Pseudarthrobacter chlorophenolicus (strain ATCC 700700 / DSM 12829 / CIP 107037 / JCM 12360 / KCTC 9906 / NCIMB 13794 / A6) (Arthrobacter chlorophenolicus).